Here is a 158-residue protein sequence, read N- to C-terminus: Transcription elongation factor GreA (158 aa).

A coiled-coil region spans residues 53–73; sequence EQQSFVEGRIQEIEGKLSNAQ.

Belongs to the GreA/GreB family.

Necessary for efficient RNA polymerase transcription elongation past template-encoded arresting sites. The arresting sites in DNA have the property of trapping a certain fraction of elongating RNA polymerases that pass through, resulting in locked ternary complexes. Cleavage of the nascent transcript by cleavage factors such as GreA or GreB allows the resumption of elongation from the new 3'terminus. GreA releases sequences of 2 to 3 nucleotides. This chain is Transcription elongation factor GreA, found in Alkalilimnicola ehrlichii (strain ATCC BAA-1101 / DSM 17681 / MLHE-1).